The primary structure comprises 362 residues: Alternative oxidase, mitochondrial (362 aa).

A mitochondrion-targeting transit peptide spans 1-64; sequence MNTPKVNILH…RNFSTTSVTR (64 aa). Residues 156–176 form a helical membrane-spanning segment; that stretch reads LVRFIFLESIAGVPGMVAGML. Fe cation contacts are provided by glutamate 163, glutamate 202, and histidine 205. A helical membrane pass occupies residues 222-242; the sequence is LILGAQGVFFNAMFLSYLISP. Fe cation is bound by residues glutamate 253, glutamate 310, and histidine 313.

The protein belongs to the alternative oxidase family. As to quaternary structure, homodimer; disulfide-linked. The cofactor is Fe cation.

Its subcellular location is the mitochondrion inner membrane. Its function is as follows. Catalyzes cyanide-resistant oxygen consumption. May increase respiration when the cytochrome respiratory pathway is restricted, or in response to low temperatures. This Neurospora crassa (strain ATCC 24698 / 74-OR23-1A / CBS 708.71 / DSM 1257 / FGSC 987) protein is Alternative oxidase, mitochondrial (aod-1).